A 322-amino-acid polypeptide reads, in one-letter code: MGDFSYLESFCGVLCFFFFCTFFLSFHHRRDSLARHKFSFFVFHKQRRRELIISSLRRNNLNWSRCFLVRALPSRLITVGHDFRKAPVNMKISHGGVCIFIMGVILSNAKKIQFTGKTPLGSELHIGKVRSTLRGIDQLHGPTFHSICGNFIIYKPSLKTPFMFEHDGSRPALLQSRPTEGAKVSTNGRGFSSRPTGEGNFFGPKGRRPEMALGFPHTSLPLRKKGFTVLEHNSFSHWLTMFPEKRFYFSNQETSTTKVAIHTNLFTDLYALIGTGSFETGWYMTVIKLPFIFYIWIGFIMASLGGLLSLFRKLTFYRLDWN.

Residues 174-207 (LQSRPTEGAKVSTNGRGFSSRPTGEGNFFGPKGR) form a disordered region. Polar residues predominate over residues 184-195 (VSTNGRGFSSRP).

It localises to the mitochondrion. This is an uncharacterized protein from Marchantia polymorpha (Common liverwort).